The chain runs to 349 residues: Histidinol-phosphate aminotransferase (349 aa).

K206 bears the N6-(pyridoxal phosphate)lysine mark.

Belongs to the class-II pyridoxal-phosphate-dependent aminotransferase family. Histidinol-phosphate aminotransferase subfamily. Homodimer. The cofactor is pyridoxal 5'-phosphate.

The enzyme catalyses L-histidinol phosphate + 2-oxoglutarate = 3-(imidazol-4-yl)-2-oxopropyl phosphate + L-glutamate. It functions in the pathway amino-acid biosynthesis; L-histidine biosynthesis; L-histidine from 5-phospho-alpha-D-ribose 1-diphosphate: step 7/9. This chain is Histidinol-phosphate aminotransferase, found in Hydrogenobaculum sp. (strain Y04AAS1).